Reading from the N-terminus, the 644-residue chain is Chaperone protein DnaK (644 aa).

Thr-199 bears the Phosphothreonine; by autocatalysis mark. Residues Ile-602–Lys-644 form a disordered region. Polar residues predominate over residues Glu-609–Thr-623. Residues Gly-629–Lys-644 show a composition bias toward acidic residues.

This sequence belongs to the heat shock protein 70 family.

In terms of biological role, acts as a chaperone. The sequence is that of Chaperone protein DnaK from Legionella pneumophila (strain Lens).